A 625-amino-acid chain; its full sequence is tRNA uridine 5-carboxymethylaminomethyl modification enzyme MnmG (625 aa).

14–19 (GAGHAG) serves as a coordination point for FAD. Position 273 to 287 (273 to 287 (GPRYCPSIEDKIVRF)) interacts with NAD(+).

Belongs to the MnmG family. In terms of assembly, homodimer. Heterotetramer of two MnmE and two MnmG subunits. FAD serves as cofactor.

Its subcellular location is the cytoplasm. NAD-binding protein involved in the addition of a carboxymethylaminomethyl (cmnm) group at the wobble position (U34) of certain tRNAs, forming tRNA-cmnm(5)s(2)U34. The sequence is that of tRNA uridine 5-carboxymethylaminomethyl modification enzyme MnmG from Clostridium botulinum (strain Okra / Type B1).